We begin with the raw amino-acid sequence, 138 residues long: Small ribosomal subunit protein uS11c (138 aa).

The segment at 1 to 23 (MAKPILRIGSRKNTRSSSRKNVR) is disordered. Over residues 9–23 (GSRKNTRSSSRKNVR) the composition is skewed to basic residues.

This sequence belongs to the universal ribosomal protein uS11 family. As to quaternary structure, part of the 30S ribosomal subunit.

The protein resides in the plastid. Its subcellular location is the chloroplast. This is Small ribosomal subunit protein uS11c from Nasturtium officinale (Watercress).